A 195-amino-acid chain; its full sequence is Orotate phosphoribosyltransferase (195 aa).

5-phospho-alpha-D-ribose 1-diphosphate contacts are provided by residues Arg86, Lys90, His92, and 111-119 (DDVATTGVS). Thr115 and Arg143 together coordinate orotate.

It belongs to the purine/pyrimidine phosphoribosyltransferase family. PyrE subfamily. As to quaternary structure, homodimer. Mg(2+) serves as cofactor.

The catalysed reaction is orotidine 5'-phosphate + diphosphate = orotate + 5-phospho-alpha-D-ribose 1-diphosphate. Its pathway is pyrimidine metabolism; UMP biosynthesis via de novo pathway; UMP from orotate: step 1/2. In terms of biological role, catalyzes the transfer of a ribosyl phosphate group from 5-phosphoribose 1-diphosphate to orotate, leading to the formation of orotidine monophosphate (OMP). In Saccharolobus solfataricus (strain ATCC 35092 / DSM 1617 / JCM 11322 / P2) (Sulfolobus solfataricus), this protein is Orotate phosphoribosyltransferase.